The chain runs to 291 residues: Kidney mitochondrial carrier protein 1 (291 aa).

Position 2 is an N-acetylserine (serine 2). Solcar repeat units follow at residues 7–96 (KPFV…LKRL), 104–189 (ETLL…TKKH), and 198–289 (DTVA…LKKL). Helical transmembrane passes span 9 to 26 (FVYG…TFPI), 71 to 89 (GIAP…KIGT), 106 to 124 (LLVN…SAIA), 164 to 183 (GVSL…LPVY), 204 to 224 (FLSS…VDVV), and 264 to 283 (GFWP…FLTY).

The protein belongs to the mitochondrial carrier (TC 2.A.29) family. In terms of assembly, interacts with VDAC1. As to expression, present in kidney (at protein level). Expressed predominantly within the kidney cortex in the proximal and distal tubules and at lower levels in the testis and white adipose tissue.

It is found in the mitochondrion inner membrane. The enzyme catalyses sulfite(in) + sulfate(out) = sulfite(out) + sulfate(in). It carries out the reaction thiosulfate(in) + sulfate(out) = thiosulfate(out) + sulfate(in). It catalyses the reaction sulfate(out) + phosphate(in) = sulfate(in) + phosphate(out). The catalysed reaction is oxalate(in) + sulfate(out) = oxalate(out) + sulfate(in). The enzyme catalyses malonate(in) + sulfate(out) = malonate(out) + sulfate(in). It carries out the reaction maleate(in) + sulfate(out) = maleate(out) + sulfate(in). It catalyses the reaction (S)-malate(in) + sulfate(out) = (S)-malate(out) + sulfate(in). The catalysed reaction is (3S)-citramalate(in) + sulfate(out) = (3S)-citramalate(out) + sulfate(in). The enzyme catalyses (3R)-citramalate(in) + sulfate(out) = (3R)-citramalate(out) + sulfate(in). It carries out the reaction sulfate(out) + succinate(in) = sulfate(in) + succinate(out). It catalyses the reaction (S,S)-tartrate(in) + sulfate(out) = (S,S)-tartrate(out) + sulfate(in). The catalysed reaction is (2R,3R)-tartrate(in) + sulfate(out) = (2R,3R)-tartrate(out) + sulfate(in). The enzyme catalyses D-aspartate(in) + sulfate(out) = D-aspartate(out) + sulfate(in). It carries out the reaction L-aspartate(in) + sulfate(out) = L-aspartate(out) + sulfate(in). It catalyses the reaction sulfate(in) = sulfate(out). The catalysed reaction is phosphate(in) = phosphate(out). The enzyme catalyses (S)-malate(out) = (S)-malate(in). Functionally, antiporter that transports inorganic anions (sulfate, sulfite, thiosulfate and phosphate) and, to a lesser extent, a variety of dicarboxylates (e.g. malonate, malate and citramalate) and, even more so, aspartate. The sulfate/sulfate exchange is much higher than the phosphate/phosphate and malate/malate exchanges. The transport affinities is higher for sulfate and thiosulfate than for any other substrate. May catalyze the export of sulfite and thiosulfate (the hydrogen sulfide degradation products) from the mitochondria, thereby modulating the level of the hydrogen sulfide. Also may mediate a very low unidirectional transport of sulfate, phosphate and (S)-malate. In Mus musculus (Mouse), this protein is Kidney mitochondrial carrier protein 1.